The primary structure comprises 333 residues: Tubulin alpha chain (333 aa).

GTP is bound by residues S48, G52, T53, T88, N115, and N137.

The protein belongs to the tubulin family. In terms of assembly, dimer of alpha and beta chains. A typical microtubule is a hollow water-filled tube with an outer diameter of 25 nm and an inner diameter of 15 nM. Alpha-beta heterodimers associate head-to-tail to form protofilaments running lengthwise along the microtubule wall with the beta-tubulin subunit facing the microtubule plus end conferring a structural polarity. Microtubules usually have 13 protofilaments but different protofilament numbers can be found in some organisms and specialized cells. Requires Mg(2+) as cofactor. In terms of processing, undergoes a tyrosination/detyrosination cycle, the cyclic removal and re-addition of a C-terminal tyrosine residue by the enzymes tubulin tyrosine carboxypeptidase (TTCP) and tubulin tyrosine ligase (TTL), respectively.

It localises to the cytoplasm. The protein localises to the cytoskeleton. The enzyme catalyses GTP + H2O = GDP + phosphate + H(+). Tubulin is the major constituent of microtubules, a cylinder consisting of laterally associated linear protofilaments composed of alpha- and beta-tubulin heterodimers. Microtubules grow by the addition of GTP-tubulin dimers to the microtubule end, where a stabilizing cap forms. Below the cap, tubulin dimers are in GDP-bound state, owing to GTPase activity of alpha-tubulin. This is Tubulin alpha chain (tuba) from Dictyostelium purpureum (Slime mold).